The following is a 2276-amino-acid chain: MTGHEFKSWILELREILREIKNSHYFLDSWTQFNSVGSFIHIFFHQERFIKLFDSRIWSILLSHNSQGSTSNRYFTIKGVILFGVAVLIYRINNRNMVERKNLYLIGLLPIPMNSIGPRNDTLEESVGSSNINRLIVSLLYLPKGKKIYESSFLNPKESTWVLPITKKCSMPESNWGSRWWRDWIGKKSDSSCKISNETVAGIEILFKEKDLKYLEFVFVYYRDDPIRKDHDWEFFDRLSLRKRQNRINLNSGPLFEILVKHWICYLMSAFREKIPIEVEGFFKQQGAGSTIQSNDIEHVSHLFSRNKWAISLQNCAQFHMWQFRQDLFVSWGKNPPESDFLRNVSRENLIWLDNVWLVNKDRFFRKVRNVSSNIQYDSTRSSFVQVRDSSQLKGSSDQFRDHFDSISNEDSEYHTLLNQREIQQLKERSILWDPSFLQTEGTEIESNRFPKCLSGSSSMSRLFTEREKQMINHMLPEEIEELIGNPTRSVRSFFSDRWSELHLGSNPTERSTRDQKLLKKQQDLSFLRRSENKEMVNLFKIITYLQNTVSIHPISLDSGCDMVPKDEPDMDSSNKISFLNKNPFFDLFHLFHDRNRGGYTLHHDFESEERFQEMADLFTLSITEPDLVYHKRFAFSIDSYGLDPKQFLNGVFNSRYEWKTTSLLVLLVLFPIFYEENESFYRRIRKKRVRISCGNDLEEPKPKIVVFASNNRMEAVNQYRLIRNLIQIQHSTHRYIRNVLNRFFLMNRSDRNFEYGIQRDQIRKDTLNHRTLMKYTINQHLSNLKKSQKRWFDPLIFFSRTERSMNRDPDAYRYKWSTGSNNFQEHLEHFVSEQKSRFQVVFDRLRINPYSIDWSEVIDKKDLSKPLRFFLSKLLLFLSNSLPFLFVSFGNIPIHRSEIYIYELKGPNDPQFLESIGLQIVHLKKLKPFLLDDHETCQKSKFLINGGTISPFLFNKIPKWMIDSFHTRKNRRKSFDNTDSYFSMIFHDQYNWLNPVKSFHRSSLRSSFYKGNQLRFLNNPHHFCFYCNKRFPFYVEKARINNYDFTYGQFLNILFIRNKIFSLCVGKKKHAFWGRDTISAIESQVSNIFIPKAFPQSGDETYNLYKSFHFPSRANPFVRRAIYSIAGISGTPLTEGQIVNFERTYCQPLSDMNLSDSEGKNLYQYLNFNSNMGLIHTPCSEKYLPSEKRKKRSLCLKKCVEKGQMYRTFQRDSAYSTLSKWNLFQTYMPWFLTSTGYRYLKFLFLDTFSDLLPILSSSQKFVSIFHDIMHGSDISWRILQKKFCLPQWNLISEISSKCFHNLLLSEEMIHRNNESPLISTHLTNVREFLYAILFLLLVAAYLVCTHLLFVFGASSELQTEFEKVKSLMIPSSMIELRKILDRYPTSEPNSFWLKNLFLVALKQLGDSLGGNMLLGGGPAYGVKSIRSKKKYLNINLIDIIDLISIIPNPINRITFSRNTRHLSHTSKEIYSLIRKRKNVNGDWIDDKIESWVANSDSIDDEKREFLVQFSTLTTEKRIDQILLSLTHSDHLSKNDSGYQMIEQPGAIYLRDLVDIHKKYLMNYEFNTSSLAERRIFLAHYQTITYSQTSCGANSFHFPSHGKPFSLRLALSLSRGILVIGSIGTGRSYLVKYLAKNSYLPFITVFLNKFLDNKSQGFDDIDIDDIDASDDIDASDDILDMELELLTSMNALTMNMMPEDEDRLYITLQFELAKAMSPCIIWIPNIHDLDVNESNYFSLGLLVNLLSRDYETRNILVIASTHIPQKADPALIAPNKLNTCIKIRRLLIPQQRKHFFTLSYTRGFHLEKKMFHTNGFGSITMGSNARDLVALTNEALSISITQKKSIIDTNTIRSALHRQIWDLRSQVRSVQDHGILFYQIGRAVAQNVLLSNCPIDPISIYMKKKSCNEVDYYLYNWYFELGTSMKKLTILLYLLSCSAGSVTQDLWSLPGPDEKNGITPYGLVENDSGLVRGLLEVEGALVGSSRTCSQFDKDRVTLLLRPEPRNPLDMMQKGSCSILDQRFLYEKDESEFEEGEGEGALDRQQIEEDLFNHIVWAPRIWRPWGFLFDCIERPNELGFPYWSRSFRGKRIIYDEEDELQENDSEFLQSGTVQYQTRDRSSKEQGLFRISQFIWDPADPLFFLFKAQPFVSVFSHRELFADEEMSKGLLTPQTNPPTSLYKRWFIKKTQEKHFELLINRQRWLRTNRSLSNGSFRSNTLSESYQYLSNLFLSNGTLLDQMTKALLRKRWLFPDEMQIGFMEQEKDFPFLSRKDMWP.

1621 to 1628 (GSIGTGRS) is a binding site for ATP.

It belongs to the Ycf2 family.

It is found in the plastid. The protein localises to the chloroplast stroma. Its function is as follows. Probable ATPase of unknown function. Its presence in a non-photosynthetic plant (Epifagus virginiana) and experiments in tobacco indicate that it has an essential function which is probably not related to photosynthesis. This Guizotia abyssinica (Niger) protein is Protein Ycf2.